Reading from the N-terminus, the 429-residue chain is Adenylosuccinate synthetase (429 aa).

GTP is bound by residues 13–19 (GDEGKGK) and 41–43 (GHT). Asp-14 (proton acceptor) is an active-site residue. Residues Asp-14 and Gly-41 each contribute to the Mg(2+) site. Residues 14–17 (DEGK), 39–42 (NAGH), Thr-130, Arg-144, Gln-225, Thr-240, and Arg-304 each bind IMP. The active-site Proton donor is His-42. 300-306 (ATTGRAR) is a binding site for substrate. Residues Arg-306, 332–334 (KLD), and 413–415 (STG) each bind GTP.

The protein belongs to the adenylosuccinate synthetase family. Homodimer. Mg(2+) is required as a cofactor.

It localises to the cytoplasm. The enzyme catalyses IMP + L-aspartate + GTP = N(6)-(1,2-dicarboxyethyl)-AMP + GDP + phosphate + 2 H(+). It participates in purine metabolism; AMP biosynthesis via de novo pathway; AMP from IMP: step 1/2. Its function is as follows. Plays an important role in the de novo pathway of purine nucleotide biosynthesis. Catalyzes the first committed step in the biosynthesis of AMP from IMP. This chain is Adenylosuccinate synthetase, found in Pseudomonas fluorescens (strain Pf0-1).